Reading from the N-terminus, the 223-residue chain is MIF4G domain-containing protein A (223 aa).

Residues 7 to 206 enclose the MIF4G domain; sequence QEDYKMQAFD…LEMIEYRAAG (200 aa).

This sequence belongs to the MIF4GD family. Interacts with eif4g1, eif4g2 and slbp; probably tethered by SLBP to the 3'-end of mRNAs ending with the histone stem-loop, it also interacts with eif4g1 which is bound to their 5'-end.

Its subcellular location is the cytoplasm. The protein localises to the nucleus. Functions in replication-dependent translation of histone mRNAs which differ from other eukaryotic mRNAs in that they do not end with a poly-A tail but a stem-loop. May participate in circularizing those mRNAs specifically enhancing their translation. In Xenopus laevis (African clawed frog), this protein is MIF4G domain-containing protein A (mif4gd-a).